Reading from the N-terminus, the 113-residue chain is N(2)-fixation sustaining protein CowN (113 aa).

It belongs to the CowN family.

In terms of biological role, is required to sustain N(2)-dependent growth in the presence of low levels of carbon monoxide (CO). Probably acts by protecting the N(2) fixation ability of the nitrogenase complex, which is inactivated in the presence of CO. This chain is N(2)-fixation sustaining protein CowN, found in Azoarcus sp. (strain BH72).